A 168-amino-acid polypeptide reads, in one-letter code: Cell division inhibitor SulA (168 aa).

The segment at Ala-105 to Tyr-111 is ftsZ binding.

This sequence belongs to the SulA family. As to quaternary structure, interacts with FtsZ. Is rapidly cleaved and degraded by the Lon protease once DNA damage is repaired.

Functionally, component of the SOS system and an inhibitor of cell division. Accumulation of SulA causes rapid cessation of cell division and the appearance of long, non-septate filaments. In the presence of GTP, binds a polymerization-competent form of FtsZ in a 1:1 ratio, thus inhibiting FtsZ polymerization and therefore preventing it from participating in the assembly of the Z ring. This mechanism prevents the premature segregation of damaged DNA to daughter cells during cell division. The polypeptide is Cell division inhibitor SulA (Erwinia pyrifoliae (strain DSM 12163 / CIP 106111 / Ep16/96)).